We begin with the raw amino-acid sequence, 312 residues long: 2,3-dihydroxyphenylpropionate/2,3-dihydroxicinnamic acid 1,2-dioxygenase 1 (312 aa).

His-115 (proton donor) is an active-site residue. His-179 functions as the Proton acceptor in the catalytic mechanism.

It belongs to the LigB/MhpB extradiol dioxygenase family. In terms of assembly, homotetramer. Requires Fe(2+) as cofactor.

It carries out the reaction 3-(2,3-dihydroxyphenyl)propanoate + O2 = (2Z,4E)-2-hydroxy-6-oxonona-2,4-dienedioate + H(+). The catalysed reaction is (2E)-3-(2,3-dihydroxyphenyl)prop-2-enoate + O2 = (2Z,4E,7E)-2-hydroxy-6-oxonona-2,4,7-trienedioate + H(+). It functions in the pathway aromatic compound metabolism; 3-phenylpropanoate degradation. Functionally, catalyzes the non-heme iron(II)-dependent oxidative cleavage of 2,3-dihydroxyphenylpropionic acid and 2,3-dihydroxicinnamic acid into 2-hydroxy-6-ketononadienedioate and 2-hydroxy-6-ketononatrienedioate, respectively. The polypeptide is 2,3-dihydroxyphenylpropionate/2,3-dihydroxicinnamic acid 1,2-dioxygenase 1 (Dechloromonas aromatica (strain RCB)).